A 183-amino-acid chain; its full sequence is Archaemetzincin (183 aa).

Histidine 131 contacts Zn(2+). Glutamate 132 serves as the catalytic Proton acceptor. Residues histidine 135, histidine 141, cysteine 142, cysteine 147, cysteine 166, and cysteine 169 each contribute to the Zn(2+) site.

It belongs to the peptidase M54 family. As to quaternary structure, monomer. Requires Zn(2+) as cofactor.

Probable zinc metalloprotease whose natural substrate is unknown. The chain is Archaemetzincin from Saccharolobus islandicus (strain Y.N.15.51 / Yellowstone #2) (Sulfolobus islandicus).